The following is a 166-amino-acid chain: uncharacterized protein (166 aa).

Residue 117-124 (AAKSGGKT) coordinates ATP.

This is an uncharacterized protein from Mycoplasma pneumoniae (strain ATCC 29342 / M129 / Subtype 1) (Mycoplasmoides pneumoniae).